Consider the following 201-residue polypeptide: Small ribosomal subunit protein uS4c (201 aa).

Positions M1–R14 are enriched in basic residues. The segment at M1–Y44 is disordered. Positions M89–L152 constitute an S4 RNA-binding domain.

The protein belongs to the universal ribosomal protein uS4 family. Part of the 30S ribosomal subunit. Contacts protein S5. The interaction surface between S4 and S5 is involved in control of translational fidelity.

The protein resides in the plastid. It is found in the chloroplast. One of the primary rRNA binding proteins, it binds directly to 16S rRNA where it nucleates assembly of the body of the 30S subunit. In terms of biological role, with S5 and S12 plays an important role in translational accuracy. The sequence is that of Small ribosomal subunit protein uS4c (rps4) from Draba nemorosa (Woodland whitlowgrass).